The following is a 308-amino-acid chain: MIRHLLSSADLDAGTALQILDTAAEMATVAGREVKKLPALRGRTVVNLFYEDSTRTRISFEAAAKRLSADVINFSVKGSSVAKGESLKDTALTLQAMGADAVVVRHPASGAPYQLADWVDGSVVNAGDGTHEHPTQALLDAYTMRSRLGRLAGLSVAVVGDVLHSRVARSNVLLLSTLGAKVTLVGPPPLIPVDIAAALAPSAAVCYDLDAVLPQSDVVMMLRVQRERMNDSYFPSAREYARRYGLDGSRMRRLPEHAIVMHPGPMNRGMEITSEVADSPRSTIVEQVANGVSVRMAVLYLLLGGNNR.

The carbamoyl phosphate site is built by Arg55 and Thr56. Lys83 serves as a coordination point for L-aspartate. Carbamoyl phosphate contacts are provided by Arg105, His133, and Gln136. L-aspartate-binding residues include Arg166 and Arg223. Carbamoyl phosphate-binding residues include Gly264 and Pro265.

Belongs to the aspartate/ornithine carbamoyltransferase superfamily. ATCase family. As to quaternary structure, heterododecamer (2C3:3R2) of six catalytic PyrB chains organized as two trimers (C3), and six regulatory PyrI chains organized as three dimers (R2).

It carries out the reaction carbamoyl phosphate + L-aspartate = N-carbamoyl-L-aspartate + phosphate + H(+). It participates in pyrimidine metabolism; UMP biosynthesis via de novo pathway; (S)-dihydroorotate from bicarbonate: step 2/3. In terms of biological role, catalyzes the condensation of carbamoyl phosphate and aspartate to form carbamoyl aspartate and inorganic phosphate, the committed step in the de novo pyrimidine nucleotide biosynthesis pathway. This chain is Aspartate carbamoyltransferase catalytic subunit, found in Salinispora tropica (strain ATCC BAA-916 / DSM 44818 / JCM 13857 / NBRC 105044 / CNB-440).